The primary structure comprises 858 residues: Elongation factor 2 (858 aa).

Residues 17 to 362 (ANIRNMSVIA…MITIHLPSPV (346 aa)) form the tr-type G domain. GTP contacts are provided by residues 26–33 (AHVDHGKS), 158–161 (NKMD), and 216–218 (SGL). At histidine 715 the chain carries Diphthamide.

It belongs to the TRAFAC class translation factor GTPase superfamily. Classic translation factor GTPase family. EF-G/EF-2 subfamily. Binds to 80S ribosomes. Actively translating ribosomes show mutually exclusive binding of eIF5a (EIF5A or EIF5A2) and EEF2/eEF2. Interacts with serbp1; interaction sequesters eef2/eEF2 at the A-site of the ribosome, thereby blocking the interaction sites of the mRNA-tRNA complex, promoting ribosome stabilization and hibernation. Interacts with habp4; interaction takes place at the A-site of hibernating ribosomes and promotes ribosome stabilization.

The protein localises to the cytoplasm. Its subcellular location is the nucleus. It carries out the reaction GTP + H2O = GDP + phosphate + H(+). In terms of biological role, catalyzes the GTP-dependent ribosomal translocation step during translation elongation. During this step, the ribosome changes from the pre-translocational (PRE) to the post-translocational (POST) state as the newly formed A-site-bound peptidyl-tRNA and P-site-bound deacylated tRNA move to the P and E sites, respectively. Catalyzes the coordinated movement of the two tRNA molecules, the mRNA and conformational changes in the ribosome. In Xenopus laevis (African clawed frog), this protein is Elongation factor 2.